We begin with the raw amino-acid sequence, 190 residues long: Elongation factor P-like protein (190 aa).

The protein belongs to the elongation factor P family.

The protein is Elongation factor P-like protein of Marinomonas sp. (strain MWYL1).